The chain runs to 419 residues: uncharacterized protein (419 aa).

Transmembrane regions (helical) follow at residues Arg-15–Leu-35, Ala-36–Val-56, Tyr-77–Gln-99, Val-104–Leu-126, Met-140–Leu-160, Ile-166–Leu-186, Phe-213–Ala-233, Gln-246–Leu-266, Leu-282–Gly-302, Val-309–Phe-329, Phe-351–Met-371, and Leu-377–Gly-397.

This sequence belongs to the major facilitator superfamily.

It localises to the cell membrane. This is an uncharacterized protein from Mycobacterium tuberculosis (strain CDC 1551 / Oshkosh).